A 385-amino-acid chain; its full sequence is Nonsense-mediated mRNA decay factor SMG9 (385 aa).

The tract at residues 1-32 (MKKVEILKTSRPSSAGGAARPSTASPTHGAPK) is disordered.

This sequence belongs to the SMG9 family.

In terms of biological role, involved in nonsense-mediated decay (NMD) of mRNAs containing premature stop codons. Probable component of kinase complex containing smg-1 and recruited to stalled ribosomes. This is Nonsense-mediated mRNA decay factor SMG9 (smg-9) from Caenorhabditis elegans.